Consider the following 109-residue polypeptide: UPF0482 protein ESA_01750 (109 aa).

The first 24 residues, 1–24 (MNKFLRHSLLLALLTGALSGVANA), serve as a signal peptide directing secretion. Basic and acidic residues predominate over residues 38–55 (RTRQDAAMDKEQWNDTRS). The disordered stretch occupies residues 38-63 (RTRQDAAMDKEQWNDTRSLRQKVNKR).

This sequence belongs to the UPF0482 family.

In Cronobacter sakazakii (strain ATCC BAA-894) (Enterobacter sakazakii), this protein is UPF0482 protein ESA_01750.